Consider the following 147-residue polypeptide: Hemoglobin larval subunit beta-1 (147 aa).

The region spanning 3 to 147 (HLSADEKSAI…LVAALSHGYF (145 aa)) is the Globin domain. Residues His64 and His93 each contribute to the heme b site.

Belongs to the globin family. Heterotetramer of two alpha chains and two beta chains. In terms of tissue distribution, red blood cells.

In terms of biological role, this is a larval (tadpole) beta-globin. The protein is Hemoglobin larval subunit beta-1 of Xenopus laevis (African clawed frog).